Reading from the N-terminus, the 260-residue chain is Global transcriptional regulator CodY (260 aa).

Positions 1–159 (MPNLLEKTRK…SSTVVGIQLL (159 aa)) are GAF domain. Residues 207-226 (ASVIADRIGITRSVIVNALR) constitute a DNA-binding region (H-T-H motif).

The protein belongs to the CodY family.

Its subcellular location is the cytoplasm. Its function is as follows. DNA-binding global transcriptional regulator which is involved in the adaptive response to starvation and acts by directly or indirectly controlling the expression of numerous genes in response to nutrient availability. During rapid exponential growth, CodY is highly active and represses genes whose products allow adaptation to nutrient depletion. The sequence is that of Global transcriptional regulator CodY from Streptococcus pyogenes serotype M1.